A 259-amino-acid chain; its full sequence is UPF0246 protein NGK_0633 (259 aa).

The protein belongs to the UPF0246 family.

The protein is UPF0246 protein NGK_0633 of Neisseria gonorrhoeae (strain NCCP11945).